Consider the following 256-residue polypeptide: Acetyl-coenzyme A carboxylase carboxyl transferase subunit alpha (256 aa).

The CoA carboxyltransferase C-terminal domain maps to 1–236 (MTDVARILKE…KLHLIDEITQ (236 aa)).

It belongs to the AccA family. In terms of assembly, acetyl-CoA carboxylase is a heterohexamer composed of biotin carboxyl carrier protein (AccB), biotin carboxylase (AccC) and two subunits each of ACCase subunit alpha (AccA) and ACCase subunit beta (AccD).

It is found in the cytoplasm. The enzyme catalyses N(6)-carboxybiotinyl-L-lysyl-[protein] + acetyl-CoA = N(6)-biotinyl-L-lysyl-[protein] + malonyl-CoA. It participates in lipid metabolism; malonyl-CoA biosynthesis; malonyl-CoA from acetyl-CoA: step 1/1. Component of the acetyl coenzyme A carboxylase (ACC) complex. First, biotin carboxylase catalyzes the carboxylation of biotin on its carrier protein (BCCP) and then the CO(2) group is transferred by the carboxyltransferase to acetyl-CoA to form malonyl-CoA. This chain is Acetyl-coenzyme A carboxylase carboxyl transferase subunit alpha, found in Streptococcus equi subsp. zooepidemicus (strain H70).